Here is a 334-residue protein sequence, read N- to C-terminus: Chitinase 9 (334 aa).

A signal peptide spans 1 to 23 (MKATTTAVALLVAAAAMAAQVVA). A Chitin-binding type-1 domain is found at 24 to 64 (EQCGSQAGGALCPNCLCCSSYGWCGSTSDYCGDGCQSQCDG). 8 disulfide bridges follow: cysteine 26-cysteine 41, cysteine 35-cysteine 47, cysteine 38-cysteine 65, cysteine 40-cysteine 54, cysteine 58-cysteine 62, cysteine 107-cysteine 169, cysteine 181-cysteine 189, and cysteine 288-cysteine 320. The active-site Proton donor is the glutamate 151.

It belongs to the glycosyl hydrolase 19 family. Chitinase class I subfamily. As to expression, expressed at high levels in roots, sheaths and meristems.

It carries out the reaction Random endo-hydrolysis of N-acetyl-beta-D-glucosaminide (1-&gt;4)-beta-linkages in chitin and chitodextrins.. Its function is as follows. May play a role in defense against fungal pathogens containing chitin. This Oryza sativa subsp. japonica (Rice) protein is Chitinase 9 (Cht9).